We begin with the raw amino-acid sequence, 364 residues long: Matrix protein (364 aa).

Positions 23-26 (FPIV) match the FPIV motif motif.

Belongs to the morbillivirus/respirovirus/rubulavirus M protein family.

It localises to the virion. The M protein has a crucial role in virus assembly and interacts with the RNP complex as well as with the viral membrane. The chain is Matrix protein (M) from Gallus gallus (Chicken).